The following is a 706-amino-acid chain: MAFCNTEYFDQIGNIQKIIHERERRRHELEETLFSYLRSDERLTRLKCAKMRCYAKELHEREQRAKTRNLELLGNVENLASKLKEFSIDCSRLLQKRMEYKNHITRLKKDRRKMGSRGKSEADEHPSRLSTQGLSQSAAIFMGHQTSNGSSRNDGATTKRLPSHTEQIPNHPSLPPSQSGLCMHSHVSKASGAGILSDDILNSGDFLEGRRLSDVREKQMESDWDISQRAREQQRQEELKSPHTTLKEAEVSSRSVTVNKPADIVSLEHCPTRSPSPDTTDPSDASHYMNSGGEDEEESAEDKDDSAPINQNHSDYTSNILKPDTSMHSDSDDSASQSQSGHHASRGNALIQEQSIKAMQTHCGSKHKKVSTWQSGQHHFSESPNRLSMKGFCHLLKCIEQRLETEDVVNLYRISVNEQNLSDDIISICSQRGRLDDIDLHACGAVVLQQLSMLSCSLPHGCLLPSDLINSHWSTTSKPQQIRLCLSAESAVLWDCCFTHMVQLQKQKLLSTDHIIQLFTPLLLPADATYTDKAGKLLKRLLTYKSETHYPSKSESSSSSSLPSLLNDSVEIKPARPSGTNAQTGEEQEIQSAEEDSADQSPVESIPIRETKAYQLLKQSVAQERHWSDSEEEVSEPPDAHKLEKPEVQQDILTQNNRKSVKTKPFSAVQSKAFWGESDDSNSEIEMALRPQSCNTSSHDFDDFYD.

The stretch at 63 to 113 (QRAKTRNLELLGNVENLASKLKEFSIDCSRLLQKRMEYKNHITRLKKDRRK) forms a coiled coil. The segment covering 105–116 (TRLKKDRRKMGS) has biased composition (basic residues). Disordered regions lie at residues 105–184 (TRLK…LCMH), 215–347 (VREK…ASRG), 571–603 (EIKPARPSGTNAQTGEEQEIQSAEEDSADQSPV), 620–665 (SVAQ…KTKP), and 677–706 (ESDDSNSEIEMALRPQSCNTSSHDFDDFYD). The segment covering 118-127 (GKSEADEHPS) has biased composition (basic and acidic residues). 2 stretches are compositionally biased toward polar residues: residues 128-156 (RLSTQGLSQSAAIFMGHQTSNGSSRNDGA) and 164-180 (HTEQIPNHPSLPPSQSG). Over residues 215–251 (VREKQMESDWDISQRAREQQRQEELKSPHTTLKEAEV) the composition is skewed to basic and acidic residues. The segment covering 272 to 283 (TRSPSPDTTDPS) has biased composition (low complexity). Positions 293–304 (GEDEEESAEDKD) are enriched in acidic residues. Positions 308–320 (PINQNHSDYTSNI) are enriched in polar residues. The span at 586–598 (EEQEIQSAEEDSA) shows a compositional bias: acidic residues. Residues 638–648 (PDAHKLEKPEV) are compositionally biased toward basic and acidic residues.

This sequence belongs to the kizuna family.

It localises to the cytoplasm. The protein localises to the cytoskeleton. It is found in the microtubule organizing center. Its subcellular location is the centrosome. The protein resides in the cilium basal body. Functionally, centrosomal protein required for establishing a robust mitotic centrosome architecture that can endure the forces that converge on the centrosomes during spindle formation. Required for stabilizing the expanded pericentriolar material around the centriole. The chain is Centrosomal protein kizuna (kiz) from Danio rerio (Zebrafish).